Consider the following 265-residue polypeptide: tRNA pseudouridine synthase A (265 aa).

The active-site Nucleophile is the D53. Substrate is bound at residue Y111.

The protein belongs to the tRNA pseudouridine synthase TruA family. As to quaternary structure, homodimer.

It carries out the reaction uridine(38/39/40) in tRNA = pseudouridine(38/39/40) in tRNA. Formation of pseudouridine at positions 38, 39 and 40 in the anticodon stem and loop of transfer RNAs. This is tRNA pseudouridine synthase A from Acinetobacter baumannii (strain AB307-0294).